We begin with the raw amino-acid sequence, 690 residues long: Calpain-9 (690 aa).

The disordered stretch occupies residues 1–24; that stretch reads MPYLYRAPGPQAHPVPKDARITHS. The Calpain catalytic domain maps to 42 to 337; that stretch reads LFEDADFPAS…FDKVEICNLT (296 aa). Ca(2+)-binding residues include Leu81, Gly83, and Asp88. Cys97 is an active-site residue. A Ca(2+)-binding site is contributed by Glu167. Active-site residues include His254 and Asn278. Ca(2+) contacts are provided by Glu284, Asp291, Leu312, Asp314, and Glu316. Residues 338-521 form a domain III region; it reads PDALEEDAIH…PPDQETEEEQ (184 aa). The interval 498-519 is disordered; that stretch reads GNVDIDLPEPPKPTPPDQETEE. 3 consecutive EF-hand domains span residues 518–552, 561–589, and 591–626; these read EEEQ…VLQK, LSLI…FKVF, and DKLK…AGFQ. Residues 522–690 form a domain IV region; the sequence is RFRALFEQVA…NEFIHLTMNI (169 aa). Residues Asp574, Ser576, Asn578, Lys580, Glu585, Asp604, Asp606, Ser608, Thr610, and Glu615 each contribute to the Ca(2+) site.

It belongs to the peptidase C2 family. Expressed predominantly in stomach.

In terms of biological role, calcium-regulated non-lysosomal thiol-protease. This is Calpain-9 (CAPN9) from Homo sapiens (Human).